The primary structure comprises 531 residues: Aspartate--tRNA ligase, cytoplasmic (531 aa).

The interval 1–45 (MADAAEGEQPKLSKKELNKLARKAKKDEKAGEKGGNQQQAAAMDQ) is disordered. Residues 8-32 (EQPKLSKKELNKLARKAKKDEKAGE) show a composition bias toward basic and acidic residues. Glutamate 259 provides a ligand contact to L-aspartate. Residues 281–284 (QLYK) are aspartate. Arginine 303 lines the L-aspartate pocket. Residues 303-305 (RAE), 311-313 (RHM), and glutamate 454 each bind ATP. L-aspartate is bound by residues serine 457 and arginine 461. 502–505 (GLER) lines the ATP pocket.

Belongs to the class-II aminoacyl-tRNA synthetase family. Type 2 subfamily. Homodimer.

It is found in the cytoplasm. The catalysed reaction is tRNA(Asp) + L-aspartate + ATP = L-aspartyl-tRNA(Asp) + AMP + diphosphate. This is Aspartate--tRNA ligase, cytoplasmic from Caenorhabditis elegans.